The primary structure comprises 316 residues: E3 ubiquitin-protein ligase rnf146 (316 aa).

The segment at 36-74 (CAICLQTCVHPVSLPCKHIFCYLCVKGASWLGRRCALCR) adopts an RING-type zinc-finger fold. In terms of domain architecture, WWE spans 91–167 (EELKSASRGN…EHGRRRKIKR (77 aa)). Residues Tyr107, Arg110, Trp114, Tyr144, Gln153, Arg163, and Lys175 each coordinate a glycoprotein. The interval 257-316 (GRNNIGEGEEGQPLINARMPAPSALLEESEPSDSNDHGSPTLQHNSLLVPQSNRLPFGNP) is disordered. The segment covering 293-310 (HGSPTLQHNSLLVPQSNR) has biased composition (polar residues).

It is found in the cytoplasm. Its subcellular location is the cytosol. The protein resides in the nucleus. It catalyses the reaction S-ubiquitinyl-[E2 ubiquitin-conjugating enzyme]-L-cysteine + [acceptor protein]-L-lysine = [E2 ubiquitin-conjugating enzyme]-L-cysteine + N(6)-ubiquitinyl-[acceptor protein]-L-lysine.. Its pathway is protein modification; protein ubiquitination. Its function is as follows. E3 ubiquitin-protein ligase that specifically binds poly-ADP-ribosylated proteins and mediates their ubiquitination and subsequent degradation. May regulate many important biological processes, such as cell survival and DNA damage response. Acts as an activator of the Wnt signaling pathway by mediating the ubiquitination of poly-ADP-ribosylated proteins. Neuroprotective protein. Protects against cell death induced by DNA damaging agents and rescues cells from G1 arrest. Promotes cell survival after gamma-irradiation. Facilitates DNA repair. The protein is E3 ubiquitin-protein ligase rnf146 (rnf146) of Xenopus tropicalis (Western clawed frog).